A 456-amino-acid polypeptide reads, in one-letter code: Exodeoxyribonuclease 7 large subunit (456 aa).

Belongs to the XseA family. As to quaternary structure, heterooligomer composed of large and small subunits.

The protein localises to the cytoplasm. The catalysed reaction is Exonucleolytic cleavage in either 5'- to 3'- or 3'- to 5'-direction to yield nucleoside 5'-phosphates.. Functionally, bidirectionally degrades single-stranded DNA into large acid-insoluble oligonucleotides, which are then degraded further into small acid-soluble oligonucleotides. The polypeptide is Exodeoxyribonuclease 7 large subunit (Escherichia coli (strain SE11)).